Consider the following 159-residue polypeptide: Ribosome maturation factor RimP (159 aa).

Belongs to the RimP family.

It localises to the cytoplasm. Its function is as follows. Required for maturation of 30S ribosomal subunits. This Bordetella avium (strain 197N) protein is Ribosome maturation factor RimP.